We begin with the raw amino-acid sequence, 78 residues long: Large ribosomal subunit protein bL28 (78 aa).

Belongs to the bacterial ribosomal protein bL28 family.

The polypeptide is Large ribosomal subunit protein bL28 (Acaryochloris marina (strain MBIC 11017)).